The sequence spans 340 residues: DNA-directed RNA polymerase subunit alpha (340 aa).

The tract at residues 1–236 (MSVIQKNWQE…DQLQLFINFE (236 aa)) is alpha N-terminal domain (alpha-NTD). The tract at residues 252–340 (FNKNLLRKVD…DLAKKLEEPY (89 aa)) is alpha C-terminal domain (alpha-CTD).

Belongs to the RNA polymerase alpha chain family. As to quaternary structure, homodimer. The RNAP catalytic core consists of 2 alpha, 1 beta, 1 beta' and 1 omega subunit. When a sigma factor is associated with the core the holoenzyme is formed, which can initiate transcription.

The enzyme catalyses RNA(n) + a ribonucleoside 5'-triphosphate = RNA(n+1) + diphosphate. DNA-dependent RNA polymerase catalyzes the transcription of DNA into RNA using the four ribonucleoside triphosphates as substrates. This chain is DNA-directed RNA polymerase subunit alpha, found in Rhodospirillum rubrum (strain ATCC 11170 / ATH 1.1.1 / DSM 467 / LMG 4362 / NCIMB 8255 / S1).